A 446-amino-acid chain; its full sequence is Signal recognition particle 54 kDa protein (446 aa).

GTP contacts are provided by residues 104-111 (GLQGSGKT), 184-188 (DTAGR), and 242-245 (TKMD).

The protein belongs to the GTP-binding SRP family. SRP54 subfamily. In terms of assembly, part of the signal recognition particle protein translocation system, which is composed of SRP and FtsY. Archaeal SRP consists of a 7S RNA molecule of 300 nucleotides and two protein subunits: SRP54 and SRP19.

It localises to the cytoplasm. It catalyses the reaction GTP + H2O = GDP + phosphate + H(+). In terms of biological role, involved in targeting and insertion of nascent membrane proteins into the cytoplasmic membrane. Binds to the hydrophobic signal sequence of the ribosome-nascent chain (RNC) as it emerges from the ribosomes. The SRP-RNC complex is then targeted to the cytoplasmic membrane where it interacts with the SRP receptor FtsY. The sequence is that of Signal recognition particle 54 kDa protein from Methanocorpusculum labreanum (strain ATCC 43576 / DSM 4855 / Z).